A 257-amino-acid polypeptide reads, in one-letter code: Acetylglutamate kinase (257 aa).

Substrate-binding positions include 43–44, Arg65, and Asn157; that span reads GG. Residues 180-185 and 208-210 contribute to the ATP site; these read DISSIL and IIT.

It belongs to the acetylglutamate kinase family. ArgB subfamily. In terms of assembly, homodimer.

It is found in the cytoplasm. It carries out the reaction N-acetyl-L-glutamate + ATP = N-acetyl-L-glutamyl 5-phosphate + ADP. It functions in the pathway amino-acid biosynthesis; L-arginine biosynthesis; N(2)-acetyl-L-ornithine from L-glutamate: step 2/4. Its function is as follows. Catalyzes the ATP-dependent phosphorylation of N-acetyl-L-glutamate. This Buchnera aphidicola subsp. Acyrthosiphon pisum (strain 5A) protein is Acetylglutamate kinase.